Here is a 205-residue protein sequence, read N- to C-terminus: Colicin-E8 (205 aa).

Disordered stretches follow at residues 24 to 109 (AQTD…PDRI) and 136 to 187 (PELS…VYDM). 3 stretches are compositionally biased toward basic and acidic residues: residues 53–76 (QERR…ESKR), 88–99 (PVGDKWLDDAGK), and 159–178 (RNKD…DKPI). Residues histidine 173, histidine 198, and histidine 202 each contribute to the Zn(2+) site.

This sequence belongs to the colicin/pyosin nuclease family.

Its function is as follows. This plasmid-coded bactericidal protein is an endonuclease active on both single- and double-stranded DNA but with undefined specificity. Colicins are polypeptide toxins produced by and active against E.coli and closely related bacteria. This Escherichia coli protein is Colicin-E8 (col).